A 287-amino-acid polypeptide reads, in one-letter code: MAIRTFRPYTPGTRTRVVTDFNEVTGRKPERSLVIAKHRLKGRNNRGVITCRHRGGGHKRQYRLVDFRRNKHGVPAKVAAIHYDPHRNARLALLFYKDGEKRYILAPAGISIGQEVLSGKDVPIEIGNALPLSSIPLGSSVHCVELYPGRGGQMVRCAGSSAQLMAKEGEYVALKLPSTEVRLVRGECYATLGEVGNSEIRNTSLGKAGRRRWLGRRPQVRGSVMNPCDHPHGGGEGRAPVGRAGPVTPWGKPALGLKTRKRNKPSNRFVLRKRRRVSKRSRGGRDS.

Residues 221-287 (RGSVMNPCDH…SKRSRGGRDS (67 aa)) are disordered. Residues 258 to 287 (KTRKRNKPSNRFVLRKRRRVSKRSRGGRDS) are compositionally biased toward basic residues.

The protein belongs to the universal ribosomal protein uL2 family. Part of the 50S ribosomal subunit. Forms a bridge to the 30S subunit in the 70S ribosome.

Its function is as follows. One of the primary rRNA binding proteins. Required for association of the 30S and 50S subunits to form the 70S ribosome, for tRNA binding and peptide bond formation. It has been suggested to have peptidyltransferase activity; this is somewhat controversial. Makes several contacts with the 16S rRNA in the 70S ribosome. In Prochlorococcus marinus (strain SARG / CCMP1375 / SS120), this protein is Large ribosomal subunit protein uL2.